A 240-amino-acid chain; its full sequence is MAEKREPAAGWPILKGEYDVGDPENCVAVITLGSHLDGGPMLEAGASITGPCKTENLGLEKVVSHIIANPNIRYLVVTGSEVKGHITGEAFIMLHKNGVSDNRIVNASGAIPYVENLTEEAVQRYQEQIECIDLIGTEDMGTISSKIKELAAKDPDAFDADPLVIEVGGEAEEEEEVGGLKPMASEISVIRGRILDIEREMARIGEFNKFHAGVHAGKFEGIMIGLAITLSLLGLILFGR.

Residues 1-218 (MAEKREPAAG…KFHAGVHAGK (218 aa)) are Cytoplasmic-facing. His-85 is a 5-hydroxybenzimidazolylcob(I)amide binding site. Residues 219 to 239 (FEGIMIGLAITLSLLGLILFG) traverse the membrane as a helical segment. Arg-240 is a topological domain (extracellular).

It belongs to the MtrA family. In terms of assembly, the complex is composed of 8 subunits; MtrA, MtrB, MtrC, MtrD, MtrE, MtrF, MtrG and MtrH. 5-hydroxybenzimidazolylcob(I)amide is required as a cofactor.

It is found in the cell membrane. It catalyses the reaction 5-methyl-5,6,7,8-tetrahydromethanopterin + coenzyme M + 2 Na(+)(in) = 5,6,7,8-tetrahydromethanopterin + methyl-coenzyme M + 2 Na(+)(out). It functions in the pathway one-carbon metabolism; methanogenesis from CO(2); methyl-coenzyme M from 5,10-methylene-5,6,7,8-tetrahydromethanopterin: step 2/2. Its function is as follows. Part of a complex that catalyzes the formation of methyl-coenzyme M and tetrahydromethanopterin from coenzyme M and methyl-tetrahydromethanopterin. This is an energy-conserving, sodium-ion translocating step. This chain is Tetrahydromethanopterin S-methyltransferase subunit A, found in Methanohalophilus mahii (strain ATCC 35705 / DSM 5219 / SLP).